Here is a 272-residue protein sequence, read N- to C-terminus: Dermonecrotic toxin LvSicTox-alphaIC1biii (272 aa).

The active site involves His-5. Residues Glu-25 and Asp-27 each coordinate Mg(2+). His-41 acts as the Nucleophile in catalysis. Disulfide bonds link Cys-45/Cys-51 and Cys-47/Cys-189. Mg(2+) is bound at residue Asp-84.

Belongs to the arthropod phospholipase D family. Class II subfamily. Mg(2+) serves as cofactor. As to expression, expressed by the venom gland.

Its subcellular location is the secreted. The catalysed reaction is an N-(acyl)-sphingosylphosphocholine = an N-(acyl)-sphingosyl-1,3-cyclic phosphate + choline. It carries out the reaction an N-(acyl)-sphingosylphosphoethanolamine = an N-(acyl)-sphingosyl-1,3-cyclic phosphate + ethanolamine. The enzyme catalyses a 1-acyl-sn-glycero-3-phosphocholine = a 1-acyl-sn-glycero-2,3-cyclic phosphate + choline. It catalyses the reaction a 1-acyl-sn-glycero-3-phosphoethanolamine = a 1-acyl-sn-glycero-2,3-cyclic phosphate + ethanolamine. Its function is as follows. Dermonecrotic toxins cleave the phosphodiester linkage between the phosphate and headgroup of certain phospholipids (sphingolipid and lysolipid substrates), forming an alcohol (often choline) and a cyclic phosphate. This toxin acts on sphingomyelin (SM). It may also act on ceramide phosphoethanolamine (CPE), lysophosphatidylcholine (LPC) and lysophosphatidylethanolamine (LPE), but not on lysophosphatidylserine (LPS), and lysophosphatidylglycerol (LPG). It acts by transphosphatidylation, releasing exclusively cyclic phosphate products as second products. Induces dermonecrosis, hemolysis, increased vascular permeability, edema, inflammatory response, and platelet aggregation. This is Dermonecrotic toxin LvSicTox-alphaIC1biii from Loxosceles variegata (Recluse spider).